The following is a 366-amino-acid chain: Mitochondrial division protein fszB (366 aa).

GTP-binding positions include 70–74 (GGGGN), 157–159 (GTG), Glu-190, and Asp-238.

It belongs to the FtsZ family.

Its subcellular location is the mitochondrion. Its function is as follows. Probably involved in mitochondrion division process. Binds to and hydrolyzes GTP. The protein is Mitochondrial division protein fszB (fszB) of Dictyostelium discoideum (Social amoeba).